The sequence spans 375 residues: Palmitoyltransferase PFA4 (375 aa).

Topologically, residues 1–9 (MAVLVKWPW) are cytoplasmic. Residues 10-30 (LGVAIPCFLISFTGYFAHFFV) form a helical membrane-spanning segment. Residues 31 to 33 (LTN) lie on the Lumenal side of the membrane. A helical membrane pass occupies residues 34-54 (FLSFKELLWFQVSLSMIWISY). At 55 to 121 (WKAIYKNPGR…MNCVGYKNFP (67 aa)) the chain is on the cytoplasmic side. One can recognise a DHHC domain in the interval 78 to 128 (NYCTKCETYKPERTHHCKRCNQCVLVMDHHCPWTMNCVGYKNFPHFIRFLF). Catalysis depends on cysteine 108, which acts as the S-palmitoyl cysteine intermediate. A helical membrane pass occupies residues 122–142 (HFIRFLFWIIATTGILLHYFV). The Lumenal segment spans residues 143–164 (KRIKFTWVNRYATANLVSKQEL). The helical transmembrane segment at 165–185 (IFLTILTPLDAFILLTISLLF) threads the bilayer. Topologically, residues 186–375 (VRCVKNQIVN…EHFGVDVEVE (190 aa)) are cytoplasmic.

The protein belongs to the DHHC palmitoyltransferase family. PFA4 subfamily.

Its subcellular location is the endoplasmic reticulum membrane. It carries out the reaction L-cysteinyl-[protein] + hexadecanoyl-CoA = S-hexadecanoyl-L-cysteinyl-[protein] + CoA. In terms of biological role, mediates the reversible addition of palmitate to target proteins, thereby regulating their membrane association and biological function. In Eremothecium gossypii (strain ATCC 10895 / CBS 109.51 / FGSC 9923 / NRRL Y-1056) (Yeast), this protein is Palmitoyltransferase PFA4.